Reading from the N-terminus, the 516-residue chain is Cytochrome P450 93G1 (516 aa).

A helical transmembrane segment spans residues 11–31 (LLGMGTTMGALALALVVVVVV). Cys454 serves as a coordination point for heme.

The protein belongs to the cytochrome P450 family. Heme is required as a cofactor.

The protein resides in the membrane. It carries out the reaction a flavanone + reduced [NADPH--hemoprotein reductase] + O2 = a flavone + oxidized [NADPH--hemoprotein reductase] + 2 H2O + H(+). Its pathway is secondary metabolite biosynthesis; flavonoid biosynthesis. Functions as a flavone synthase II (FNSII) that catalyzes the direct conversion of flavanones to flavones. In vitro, can convert naringenin and eriodictyol to apigenin and luteolin, respectively. Acts as a key branch point enzyme that channels flavanones to the biosynthesis of soluble tricin O-linked conjugates. The protein is Cytochrome P450 93G1 of Oryza sativa subsp. japonica (Rice).